Here is a 128-residue protein sequence, read N- to C-terminus: Small ribosomal subunit protein bS6 (128 aa).

Belongs to the bacterial ribosomal protein bS6 family.

Its function is as follows. Binds together with bS18 to 16S ribosomal RNA. This is Small ribosomal subunit protein bS6 from Leifsonia xyli subsp. xyli (strain CTCB07).